A 1312-amino-acid polypeptide reads, in one-letter code: MTDYPFYKPDDETNIIYNININKKEGFSAIKSCSLAKLIEKLTSTKQLHTYFSSAFFLTYRDFTTPLEIINLLISRYTGPPPDSSKDSLRLFEIEVDIVQANVLSIFRTLIGTLIQVDFDTPKLSSSIIEFFNSLPESVKNELFLEFFKAKKMARPPGSIPKPVNSNIISSAASTMRFSYSVSPKTQSPNSTNNVLSGLLSNNGSNTMNGINGTSNNNVNSNNNNNNGTTNISSPNFDPSRSSMKMGKGIMKLLQSNIANFNNQQNGGGGGGSNNGTSPQSSPSSTLSSTNSLFNQQPSLSMLNDDGSVQNNNNNNNNNNNNNNVNEISTINVQLPPSTPPINGIPGEKTAFLPEAIAKELTIMEWELITALSVSDITSKEWNKSVNIQNLTTWFNRISSWVSTKIISKETPEERAIIIEAFINIANFAKELKNYNCVMEILGSLHGSSISRLKSSWALLSQKTNDMFQILNNLMTTDGNFKNYRKILTTVLPNEPCIPYLGLFLTDYTYLDESNPSLSTDSNLINIDRIFLISTRVQEFFQLFTNCNYTFISNMSVRDAILGEKVWDENEIFRLSKIREETSSLQSLKESNGIGNSNSTSGGSSSSLVNKDGSGGGGGSGGGGSVNSKGDGKGDGKDNRDGRGDGNSNCGNGSGISSKDKDLLLSSSSSAASHTVRRKNFVTKYRMSFTGNDPLPSVSSTLSEREWKILTTNSKTIIYPRGKTVLSVGETNTNIYRVISGRVKVETLKSFNSSDADLGAGGGGGGDNRGEDNSLMAIKARNRLSLNLPAQDDGYYVEEGEIFGQESFLYTDRPMLSNIIVDSGECELMEIEKSFVLQLFASEHQLSATFYKFIGVIQAQLLKSIYINFTSNYGNGGSGGSGSNGNGGGSSNGAGGGGLSSSVSIGNLNSPNINRIDFKRRSTIFETPSSLDILRDGNDSSFRTKFGLSQDEVIIKRYQCKHNNMNGTLYITKHNLCFEGKFLGINKNKTIPFDRTDKILTVDKNIMTVTTKEKVKKFTFKSHDDLNEGYGISVQIWANHLNINVKQQLQLQQQQLQQQQQQPSQQPSQQQSQSSQLQQSVSASSTTPPVPNSPKVGRGESFSNIKDLPSKDEWNQILKGTKPLTFKKGEILICEGVEYQKMFQIVKGECSVVKSLLPTPLDQNIFNNINNNNNNNNNNNNNNNNNNNNNNNNNNNGNNNNSIFKNNSSISNTNSNTSIDGGVGGGLSPQTLVDPKNSVIVSKLTHGSIFGEMSFLLPGGSATSLVVSSDEVEVYIIESYFLHILLKSKPYLASKFYKYLACVLETRVRNLT.

Positions 26-155 (GFSAIKSCSL…EFFKAKKMAR (130 aa)) constitute an N-terminal Ras-GEF domain. 2 stretches are compositionally biased toward low complexity: residues 206 to 236 (NTMN…SSPN) and 275 to 296 (NGTS…LFNQ). 2 disordered regions span residues 206–244 (NTMN…RSSM) and 260–326 (NFNN…NNVN). Residues 297-310 (QPSLSMLNDDGSVQ) show a composition bias toward polar residues. Low complexity predominate over residues 311–326 (NNNNNNNNNNNNNNVN). Residues 353–582 (LPEAIAKELT…FRLSKIREET (230 aa)) enclose the Ras-GEF domain. A disordered region spans residues 586 to 658 (QSLKESNGIG…NCGNGSGISS (73 aa)). Residues 591–612 (SNGIGNSNSTSGGSSSSLVNKD) show a composition bias toward low complexity. Over residues 613-625 (GSGGGGGSGGGGS) the composition is skewed to gly residues. Residues 630-644 (GDGKGDGKDNRDGRG) are compositionally biased toward basic and acidic residues. Residues 646–657 (GNSNCGNGSGIS) show a composition bias toward low complexity. A nucleoside 3',5'-cyclic phosphate is bound at residue 698–857 (VSSTLSEREW…ATFYKFIGVI (160 aa)). Residues 940–1006 (SSFRTKFGLS…DKILTVDKNI (67 aa)) enclose the GRAM domain. Over residues 1059–1087 (QQQQPSQQPSQQQSQSSQLQQSVSASSTT) the composition is skewed to low complexity. Disordered stretches follow at residues 1059–1108 (QQQQ…IKDL) and 1167–1210 (NNIN…NSSI). Residues 1105 to 1218 (IKDL…SNTS) and 1182 to 1303 (NNNN…LACV) each bind a nucleoside 3',5'-cyclic phosphate.

Promotes the exchange of Ras-bound GDP by GTP. Induces the formation of substrate-attached pseudopodia, that leads to increased adhesion and thereby negatively influencing cell speed and polarity. This is Cyclic GMP-binding protein D (gbpD) from Dictyostelium discoideum (Social amoeba).